We begin with the raw amino-acid sequence, 331 residues long: MDDRMVDQALHSEETSFELSLRPTMLKQYIGQSSIKNNLEVFIKAAKLREEPLDHVLLFGPPGLGKTTLSNIIANEMNVNIRTVSGPSLDRPGDLAAILSGLQPGDVLFIDEIHRLSSTVEEVLYSAMEDFFIDIIIGKGDEARSIRIDLPPFTLVGATTRAGSLTGPLRDRFGVHLRLEYYNENDLKEIIIRTAEVLNTKIDDESATELAKRSRGTPRVANRLLKRVRDFQQVNEDEQIYIETTKQALQLLQVDAEGLDYIDHKMMRCIINQYDGGPVGLDTIAVSIGEERITIEDVYEPFLIQKGFIERTPRGRKATAFAYEHFKNFNK.

The tract at residues 1–182 is large ATPase domain (RuvB-L); sequence MDDRMVDQAL…FGVHLRLEYY (182 aa). Residues L21, R22, G63, K66, T67, T68, 129-131, R172, Y182, and R219 each bind ATP; that span reads EDF. T67 lines the Mg(2+) pocket. A small ATPAse domain (RuvB-S) region spans residues 183–253; the sequence is NENDLKEIII…TTKQALQLLQ (71 aa). The segment at 256-331 is head domain (RuvB-H); it reads AEGLDYIDHK…AYEHFKNFNK (76 aa). Residues R292, R311, and R316 each contribute to the DNA site.

Belongs to the RuvB family. As to quaternary structure, homohexamer. Forms an RuvA(8)-RuvB(12)-Holliday junction (HJ) complex. HJ DNA is sandwiched between 2 RuvA tetramers; dsDNA enters through RuvA and exits via RuvB. An RuvB hexamer assembles on each DNA strand where it exits the tetramer. Each RuvB hexamer is contacted by two RuvA subunits (via domain III) on 2 adjacent RuvB subunits; this complex drives branch migration. In the full resolvosome a probable DNA-RuvA(4)-RuvB(12)-RuvC(2) complex forms which resolves the HJ.

The protein resides in the cytoplasm. It carries out the reaction ATP + H2O = ADP + phosphate + H(+). In terms of biological role, the RuvA-RuvB-RuvC complex processes Holliday junction (HJ) DNA during genetic recombination and DNA repair, while the RuvA-RuvB complex plays an important role in the rescue of blocked DNA replication forks via replication fork reversal (RFR). RuvA specifically binds to HJ cruciform DNA, conferring on it an open structure. The RuvB hexamer acts as an ATP-dependent pump, pulling dsDNA into and through the RuvAB complex. RuvB forms 2 homohexamers on either side of HJ DNA bound by 1 or 2 RuvA tetramers; 4 subunits per hexamer contact DNA at a time. Coordinated motions by a converter formed by DNA-disengaged RuvB subunits stimulates ATP hydrolysis and nucleotide exchange. Immobilization of the converter enables RuvB to convert the ATP-contained energy into a lever motion, pulling 2 nucleotides of DNA out of the RuvA tetramer per ATP hydrolyzed, thus driving DNA branch migration. The RuvB motors rotate together with the DNA substrate, which together with the progressing nucleotide cycle form the mechanistic basis for DNA recombination by continuous HJ branch migration. Branch migration allows RuvC to scan DNA until it finds its consensus sequence, where it cleaves and resolves cruciform DNA. The protein is Holliday junction branch migration complex subunit RuvB of Staphylococcus haemolyticus (strain JCSC1435).